Consider the following 1026-residue polypeptide: Contactin-4 (1026 aa).

The first 18 residues, 1-18 (MRLPWELLVLQSFMLCLA), serve as a signal peptide directing secretion. 6 consecutive Ig-like C2-type domains span residues 32–117 (PSHV…AKLQ), 122–206 (ENFK…HQVL), 225–311 (PKIE…GQVT), 316–400 (PNWV…AELS), 406–493 (PDFS…GNVV), and 497–586 (PTKV…DKLS). Disulfide bonds link cysteine 50-cysteine 100, cysteine 144-cysteine 194, cysteine 247-cysteine 295, cysteine 337-cysteine 384, cysteine 429-cysteine 477, and cysteine 519-cysteine 576. 3 N-linked (GlcNAc...) asparagine glycosylation sites follow: asparagine 65, asparagine 90, and asparagine 191. Asparagine 370, asparagine 375, and asparagine 466 each carry an N-linked (GlcNAc...) asparagine glycan. Fibronectin type-III domains are found at residues 599–697 (PPEA…TEEA), 702–799 (TPAN…SAEE), 804–899 (PPAS…TRKP), and 900–995 (PPSQ…ISNS). The segment at 685–710 (PSRPSEKRRTEEALPEVTPANVSGGG) is disordered. Residues 687–696 (RPSEKRRTEE) are compositionally biased toward basic and acidic residues. Asparagine 705, asparagine 764, asparagine 858, asparagine 893, asparagine 911, asparagine 929, and asparagine 954 each carry an N-linked (GlcNAc...) asparagine glycan. Serine 1000 is lipidated: GPI-anchor amidated serine. Positions 1001 to 1026 (GASTSNACTLSAISTIMISLTARSSL) are cleaved as a propeptide — removed in mature form.

This sequence belongs to the immunoglobulin superfamily. Contactin family. As to quaternary structure, interacts with PTPRG. Specifically expressed in the nervous system. Not expressed in heart, spleen, lung, liver, kidney or skeletal muscle. In the hippocampus, it is highly expressed in CA1 pyramidal cells and weakly expressed in other regions of the hippocampus.

It is found in the cell membrane. The protein localises to the secreted. Functionally, contactins mediate cell surface interactions during nervous system development. Has some neurite outgrowth-promoting activity. May be involved in synaptogenesis. This Rattus norvegicus (Rat) protein is Contactin-4 (Cntn4).